A 448-amino-acid polypeptide reads, in one-letter code: Microtubule-associated protein tau (448 aa).

Residues 1–16 show a composition bias toward basic and acidic residues; it reads MAEPRQEFDVMEDHAQ. Residues 1–264 form a disordered region; it reads MAEPRQEFDV…GPMPDLKNVK (264 aa). Ala2 is subject to N-acetylalanine. Residue Tyr19 is modified to Phosphotyrosine. Lys33 participates in a covalent cross-link: Glycyl lysine isopeptide (Lys-Gly) (interchain with G-Cter in ubiquitin). Phosphoserine is present on residues Ser35 and Ser50. Polar residues predominate over residues 50-60; sequence SETSDAKSTPT. Residues Thr58 and Thr60 each carry the phosphothreonine modification. Over residues 71–89 the composition is skewed to low complexity; the sequence is EGAPGEQAAAQAPAEIPEG. The residue at position 100 (Thr100) is a Phosphothreonine. The span at 119-135 shows a compositional bias: basic and acidic residues; sequence KGKDGTGPDDKKTKGAD. Position 144 is a phosphothreonine (Thr144). An Omega-N-methylarginine modification is found at Arg146. N6,N6-dimethyllysine; alternate is present on Lys154. Lys154 bears the N6-acetyllysine; alternate mark. Phosphothreonine is present on residues Thr160, Thr166, Thr167, and Thr172. Residues 163–176 are compositionally biased toward low complexity; it reads PAKTTPTPKTSPAT. Over residues 189-200 the composition is skewed to basic and acidic residues; the sequence is KSERGESGKSGD. Residues Ser198 and Ser202 each carry the phosphoserine modification. The segment covering 201-221 has biased composition (low complexity); the sequence is RSGYSSPGSPGTPGSRSRTPS. Tyr204 carries the phosphotyrosine modification. Phosphoserine is present on residues Ser205, Ser206, and Ser209. Phosphothreonine occurs at positions 212 and 219. Residue Ser221 is modified to Phosphoserine. Thr224 bears the Phosphothreonine mark. An N6-acetyllysine modification is found at Lys232. Thr238 bears the Phosphothreonine mark. Phosphoserine occurs at positions 242 and 244. Tau/MAP repeat units lie at residues 251-281, 282-312, 313-343, and 344-375; these read QAAP…GGGK, VQII…GGGS, VQIV…GGGQ, and VEVK…GGGN. A Glycyl lysine isopeptide (Lys-Gly) (interchain with G-Cter in ubiquitin) cross-link involves residue Lys261. Lys266 carries the post-translational modification N6-acetyllysine; alternate. The residue at position 266 (Lys266) is an N6-methyllysine; alternate. Lys266 is covalently cross-linked (Glycyl lysine isopeptide (Lys-Gly) (interchain with G-Cter in ubiquitin); alternate). At Ser269 the chain carries Phosphoserine. Lys274 is covalently cross-linked (Glycyl lysine isopeptide (Lys-Gly) (interchain with G-Cter in ubiquitin)). At Lys288 the chain carries N6-acetyllysine; alternate. Residue Lys288 forms a Glycyl lysine isopeptide (Lys-Gly) (interchain with G-Cter in ubiquitin); alternate linkage. Phosphoserine occurs at positions 292 and 296. Position 297 is an N6-acetyllysine (Lys297). Cys298 and Cys329 form a disulfide bridge. Phosphoserine is present on Ser300. At Lys305 the chain carries N6-acetyllysine; alternate. Lys305 participates in a covalent cross-link: Glycyl lysine isopeptide (Lys-Gly) (interchain with G-Cter in ubiquitin); alternate. Ser312 carries the phosphoserine modification. Lys318 carries the N6,N6-dimethyllysine; alternate modification. N6-acetyllysine; alternate is present on residues Lys318, Lys324, and Lys328. Residues Lys318, Lys324, and Lys328 each participate in a glycyl lysine isopeptide (Lys-Gly) (interchain with G-Cter in ubiquitin); alternate cross-link. Position 331 is a phosphoserine (Ser331). 3 positions are modified to N6-acetyllysine; alternate: Lys338, Lys350, and Lys354. Residues Lys338, Lys350, and Lys354 each participate in a glycyl lysine isopeptide (Lys-Gly) (interchain with G-Cter in ubiquitin); alternate cross-link. Position 356 is an omega-N-methylarginine (Arg356). A Phosphoserine modification is found at Ser359. A Glycyl lysine isopeptide (Lys-Gly) (interchain with G-Cter in ubiquitin) cross-link involves residue Lys360. Ser363 carries the phosphoserine modification. Lys376 bears the N6-acetyllysine; alternate mark. A Glycyl lysine isopeptide (Lys-Gly) (interchain with G-Cter in ubiquitin); alternate cross-link involves residue Lys376. Lys382 is covalently cross-linked (Glycyl lysine isopeptide (Lys-Gly) (interchain with G-Cter in ubiquitin)). Lys392 is subject to N6-acetyllysine; alternate. A Glycyl lysine isopeptide (Lys-Gly) (interchain with G-Cter in ubiquitin); alternate cross-link involves residue Lys392. At Tyr401 the chain carries Phosphotyrosine. Phosphoserine is present on residues Ser403 and Ser407. The interval 405 to 424 is disordered; it reads VVSGDTSPRHLSNVSSTGSI. Over residues 408–423 the composition is skewed to polar residues; the sequence is GDTSPRHLSNVSSTGS. Thr410 is subject to Phosphothreonine. Ser411, Ser416, Ser423, and Ser429 each carry phosphoserine. A Phosphothreonine modification is found at Thr434.

Interacts with MARK1, MARK2, MARK3 and MARK4. Interacts with SQSTM1 when polyubiquitinated. Interacts with PSMC2 through SQSTM1. Interacts with FKBP4. Binds to CSNK1D. Interacts with SGK1. Interacts with PIN1. Interacts with LRRK2. Interacts with LRP1, leading to endocytosis; this interaction is reduced in the presence of LRPAP1/RAP. Polyubiquitinated. Requires functional TRAF6 and may provoke SQSTM1-dependent degradation by the proteasome. In terms of processing, phosphorylation at various serine and threonine residues in S-P or T-P motifs by proline-directed protein kinases (PDPK1, CDK1, CDK5, GSK3, MAPK) (a few sites per protein in interphase, more in mitosis), and at serine residues in K-X-G-S motifs by MAP/microtubule affinity-regulating kinase (MARK1, MARK2, MARK3, MARK4), causing detachment from microtubules, and their disassembly. Phosphorylation at Ser-269 by BRSK1 and BRSK2 in neurons affects ability to bind microtubules and plays a role in neuron polarization. Phosphorylated by PHK. Dephosphorylation at several serine and threonine residues by the serine/threonine phosphatase PPP5C. Post-translationally, O-glycosylated; contains at least 4 GlcNAc. Site-specific or stoichiometric changes in glycosylation may modulate tau function and also play a role in PHF's formation. As to expression, expressed in neurons.

The protein resides in the cytoplasm. Its subcellular location is the cytosol. It is found in the cell membrane. It localises to the cytoskeleton. The protein localises to the cell projection. The protein resides in the axon. Its subcellular location is the dendrite. It is found in the secreted. Its function is as follows. Promotes microtubule assembly and stability, and might be involved in the establishment and maintenance of neuronal polarity. The C-terminus binds axonal microtubules while the N-terminus binds neural plasma membrane components, suggesting that tau functions as a linker protein between both. Axonal polarity is predetermined by tau localization (in the neuronal cell) in the domain of the cell body defined by the centrosome. The short isoforms allow plasticity of the cytoskeleton whereas the longer isoforms may preferentially play a role in its stabilization. The polypeptide is Microtubule-associated protein tau (MAPT) (Bos taurus (Bovine)).